The chain runs to 400 residues: Nicotinate phosphoribosyltransferase (400 aa).

His-220 is subject to Phosphohistidine; by autocatalysis.

It belongs to the NAPRTase family. Post-translationally, transiently phosphorylated on a His residue during the reaction cycle. Phosphorylation strongly increases the affinity for substrates and increases the rate of nicotinate D-ribonucleotide production. Dephosphorylation regenerates the low-affinity form of the enzyme, leading to product release.

The catalysed reaction is nicotinate + 5-phospho-alpha-D-ribose 1-diphosphate + ATP + H2O = nicotinate beta-D-ribonucleotide + ADP + phosphate + diphosphate. It functions in the pathway cofactor biosynthesis; NAD(+) biosynthesis; nicotinate D-ribonucleotide from nicotinate: step 1/1. Functionally, catalyzes the synthesis of beta-nicotinate D-ribonucleotide from nicotinate and 5-phospho-D-ribose 1-phosphate at the expense of ATP. This Citrobacter koseri (strain ATCC BAA-895 / CDC 4225-83 / SGSC4696) protein is Nicotinate phosphoribosyltransferase.